The primary structure comprises 20 residues: D-alpha-glycerophosphatase (20 aa).

Monomer. Mg(2+) serves as cofactor. The cofactor is Mn(2+).

It is found in the cytoplasm. The protein operates within polyol metabolism; glycerol biosynthesis. In Bacillus licheniformis, this protein is D-alpha-glycerophosphatase.